The chain runs to 396 residues: Phosphoglycerate kinase (396 aa).

Substrate-binding positions include 21-23 (DFN), R36, 59-62 (HLGK), R119, and R156. ATP is bound by residues K206, E325, and 352–355 (GGDS).

This sequence belongs to the phosphoglycerate kinase family. As to quaternary structure, monomer.

It localises to the cytoplasm. The catalysed reaction is (2R)-3-phosphoglycerate + ATP = (2R)-3-phospho-glyceroyl phosphate + ADP. Its pathway is carbohydrate degradation; glycolysis; pyruvate from D-glyceraldehyde 3-phosphate: step 2/5. This Staphylococcus haemolyticus (strain JCSC1435) protein is Phosphoglycerate kinase.